A 215-amino-acid chain; its full sequence is Protein C' (215 aa).

Positions 12 to 34 (MPSFLKKILKLRGRRQEDESRSR) are disordered. Residues 15 to 22 (FLKKILKL) form an involved in self-degradation and in host STAT1 degradation region.

The protein belongs to the respirovirus protein C family. As to quaternary structure, the different isoforms interact (via C-terminus) with unphosphorylated and phosphorylated human STAT1 (via N-terminus), favoring the formation of parallel STAT1 homodimers. The different isoforms do not interact with host STAT2. C protein interacts with L protein; this interaction has an inhibitory effect on viral transcription and replication. Protein Y2 is produced not only by alternative initiation, but also by proteolytic cleavage of C'. Only alternative initiation is detected in vitro, whereas in vivo cleavage seems to be predominant.

The protein resides in the host cytoplasm. Its function is as follows. The different products prevent the establishment of cellular antiviral state by blocking the interferon-alpha/beta (IFN-alpha/beta) and IFN-gamma signaling pathways. They inhibit IFN-alpha/beta induced tyrosine phosphorylation of STAT1 and STAT2. Blocking the IFN-alpha/beta pathway requires binding to STAT1 in the cytoplasm. They inhibit IFN-gamma induced serine phosphorylation of STAT1. Block the IFN-gamma pathway by binding to and stabilizing the parallel form of the STAT1 dimer, further inducing high-molecular-weight complex formation and inhibition of transcription by IFN-gamma. May also have a role in preventing the cell to enter apoptosis. Modulate regulation of viral transcription and replication. Overexpression inhibits the viral RNA polymerase. The absence of all C', C and Y2 proteins leads to viral delayed growth. Plays an important role in virion particles release. Modulates virion shape. In Cavia cutleri (Guinea pig), this protein is Protein C' (P/V/C).